A 39-amino-acid polypeptide reads, in one-letter code: Photosystem II reaction center protein L (39 aa).

Residues 16–37 (RTSLYLGLLLVAVLGILFSSYF) traverse the membrane as a helical segment.

Belongs to the PsbL family. In terms of assembly, PSII is composed of 1 copy each of membrane proteins PsbA, PsbB, PsbC, PsbD, PsbE, PsbF, PsbH, PsbI, PsbJ, PsbK, PsbL, PsbM, PsbT, PsbX, PsbY, PsbZ, Psb30/Ycf12, peripheral proteins PsbO, CyanoQ (PsbQ), PsbU, PsbV and a large number of cofactors. It forms dimeric complexes.

The protein resides in the cellular thylakoid membrane. One of the components of the core complex of photosystem II (PSII). PSII is a light-driven water:plastoquinone oxidoreductase that uses light energy to abstract electrons from H(2)O, generating O(2) and a proton gradient subsequently used for ATP formation. It consists of a core antenna complex that captures photons, and an electron transfer chain that converts photonic excitation into a charge separation. This subunit is found at the monomer-monomer interface and is required for correct PSII assembly and/or dimerization. Required for PSII activity, at least in part due to its effects on PSII assembly. May make specific contact(s) with lipids. The polypeptide is Photosystem II reaction center protein L (Synechocystis sp. (strain ATCC 27184 / PCC 6803 / Kazusa)).